A 401-amino-acid polypeptide reads, in one-letter code: 1-deoxy-D-xylulose 5-phosphate reductoisomerase (401 aa).

The NADPH site is built by Thr11, Gly12, Ser13, Ile14, Arg38, Asn39, and Asn125. Lys126 contacts 1-deoxy-D-xylulose 5-phosphate. Glu127 contacts NADPH. Position 151 (Asp151) interacts with Mn(2+). 1-deoxy-D-xylulose 5-phosphate contacts are provided by Ser152, Glu153, Ser179, and His202. A Mn(2+)-binding site is contributed by Glu153. Residue Gly208 coordinates NADPH. 1-deoxy-D-xylulose 5-phosphate-binding residues include Ser215, Asn220, Lys221, and Glu224. Glu224 is a binding site for Mn(2+).

It belongs to the DXR family. Mg(2+) serves as cofactor. Requires Mn(2+) as cofactor.

It catalyses the reaction 2-C-methyl-D-erythritol 4-phosphate + NADP(+) = 1-deoxy-D-xylulose 5-phosphate + NADPH + H(+). Its pathway is isoprenoid biosynthesis; isopentenyl diphosphate biosynthesis via DXP pathway; isopentenyl diphosphate from 1-deoxy-D-xylulose 5-phosphate: step 1/6. Catalyzes the NADPH-dependent rearrangement and reduction of 1-deoxy-D-xylulose-5-phosphate (DXP) to 2-C-methyl-D-erythritol 4-phosphate (MEP). The sequence is that of 1-deoxy-D-xylulose 5-phosphate reductoisomerase from Paraburkholderia phytofirmans (strain DSM 17436 / LMG 22146 / PsJN) (Burkholderia phytofirmans).